We begin with the raw amino-acid sequence, 473 residues long: Siroheme synthase 1 (473 aa).

Residues M1 to V204 form a precorrin-2 dehydrogenase /sirohydrochlorin ferrochelatase region. NAD(+) contacts are provided by residues E22 to I23 and C43 to E44. S128 carries the post-translational modification Phosphoserine. Residues G216–G473 form a uroporphyrinogen-III C-methyltransferase region. P225 contacts S-adenosyl-L-methionine. Residue D248 is the Proton acceptor of the active site. The Proton donor role is filled by K270. S-adenosyl-L-methionine is bound by residues G301–D303, I306, T331–A332, M382, and G411.

It in the N-terminal section; belongs to the precorrin-2 dehydrogenase / sirohydrochlorin ferrochelatase family. The protein in the C-terminal section; belongs to the precorrin methyltransferase family.

The enzyme catalyses uroporphyrinogen III + 2 S-adenosyl-L-methionine = precorrin-2 + 2 S-adenosyl-L-homocysteine + H(+). The catalysed reaction is precorrin-2 + NAD(+) = sirohydrochlorin + NADH + 2 H(+). It carries out the reaction siroheme + 2 H(+) = sirohydrochlorin + Fe(2+). The protein operates within cofactor biosynthesis; adenosylcobalamin biosynthesis; precorrin-2 from uroporphyrinogen III: step 1/1. It participates in cofactor biosynthesis; adenosylcobalamin biosynthesis; sirohydrochlorin from precorrin-2: step 1/1. It functions in the pathway porphyrin-containing compound metabolism; siroheme biosynthesis; precorrin-2 from uroporphyrinogen III: step 1/1. Its pathway is porphyrin-containing compound metabolism; siroheme biosynthesis; siroheme from sirohydrochlorin: step 1/1. The protein operates within porphyrin-containing compound metabolism; siroheme biosynthesis; sirohydrochlorin from precorrin-2: step 1/1. Functionally, multifunctional enzyme that catalyzes the SAM-dependent methylations of uroporphyrinogen III at position C-2 and C-7 to form precorrin-2 via precorrin-1. Then it catalyzes the NAD-dependent ring dehydrogenation of precorrin-2 to yield sirohydrochlorin. Finally, it catalyzes the ferrochelation of sirohydrochlorin to yield siroheme. The polypeptide is Siroheme synthase 1 (Yersinia pestis (strain Pestoides F)).